Reading from the N-terminus, the 589-residue chain is 3-(3-hydroxy-phenyl)propionate/3-hydroxycinnamic acid hydroxylase (589 aa).

FAD-binding positions include 15-44 and 283-293; these read DVLI…VAEK and FRVDRILLAGD.

Belongs to the PheA/TfdB FAD monooxygenase family. FAD serves as cofactor.

It catalyses the reaction 3-(3-hydroxyphenyl)propanoate + NADH + O2 + H(+) = 3-(2,3-dihydroxyphenyl)propanoate + NAD(+) + H2O. It carries out the reaction (2E)-3-(3-hydroxyphenyl)prop-2-enoate + NADH + O2 + H(+) = (2E)-3-(2,3-dihydroxyphenyl)prop-2-enoate + NAD(+) + H2O. It functions in the pathway aromatic compound metabolism; 3-phenylpropanoate degradation. Catalyzes the insertion of one atom of molecular oxygen into position 2 of the phenyl ring of 3-(3-hydroxyphenyl)propionate (3-HPP) and hydroxycinnamic acid (3HCI). The polypeptide is 3-(3-hydroxy-phenyl)propionate/3-hydroxycinnamic acid hydroxylase (Comamonas testosteroni (Pseudomonas testosteroni)).